The sequence spans 137 residues: Large ribosomal subunit protein uL16 (137 aa).

Belongs to the universal ribosomal protein uL16 family. Part of the 50S ribosomal subunit.

Its function is as follows. Binds 23S rRNA and is also seen to make contacts with the A and possibly P site tRNAs. The protein is Large ribosomal subunit protein uL16 of Acinetobacter baumannii (strain AB307-0294).